A 569-amino-acid chain; its full sequence is Beta-lactamase-like protein 4 (569 aa).

Residues 1–19 (MKYYLYLFLLFTFANLLYS) form the signal peptide. 13 N-linked (GlcNAc...) asparagine glycosylation sites follow: Asn87, Asn172, Asn239, Asn240, Asn250, Asn299, Asn343, Asn412, Asn419, Asn436, Asn468, Asn509, and Asn535.

This sequence belongs to the beta-lactamase family.

It localises to the secreted. The chain is Beta-lactamase-like protein 4 from Dictyostelium discoideum (Social amoeba).